The following is a 160-amino-acid chain: MSEPLTIGIKRLPHGADLPLPAYQSAGAAGLDLLAAIAPGSKLTLEPGERRLVPTGLVLQIPPSHEGQLRPRSGLALKAGVTVLNAPGTIDSDYRGEVGVLLINFGAEPFEIARGERIAQLIIAPVTRAVLVETDGLEATARGAGGFGSTGAAAIGETRR.

Residues 72–74 (RSG), Asn85, and 89–91 (TID) contribute to the substrate site.

Belongs to the dUTPase family. It depends on Mg(2+) as a cofactor.

It carries out the reaction dUTP + H2O = dUMP + diphosphate + H(+). The protein operates within pyrimidine metabolism; dUMP biosynthesis; dUMP from dCTP (dUTP route): step 2/2. Its function is as follows. This enzyme is involved in nucleotide metabolism: it produces dUMP, the immediate precursor of thymidine nucleotides and it decreases the intracellular concentration of dUTP so that uracil cannot be incorporated into DNA. The chain is Deoxyuridine 5'-triphosphate nucleotidohydrolase from Methylocella silvestris (strain DSM 15510 / CIP 108128 / LMG 27833 / NCIMB 13906 / BL2).